Here is a 541-residue protein sequence, read N- to C-terminus: Transmembrane protein 87A (541 aa).

The N-terminal stretch at 1–26 is a signal peptide; sequence MAAASFQPLKCLLLWVFFVITPPVKA. At 27 to 209 the chain is on the lumenal side; it reads VPEPGIWTVP…HGFISASDWP (183 aa). Residues asparagine 52, asparagine 109, asparagine 148, and asparagine 189 are each glycosylated (N-linked (GlcNAc...) asparagine). Disulfide bonds link cysteine 65-cysteine 116 and cysteine 82-cysteine 416. The helical transmembrane segment at 210 to 230 threads the bilayer; the sequence is LMIFYMVMCIMYILLALLWFI. Over 231 to 241 the chain is Cytoplasmic; that stretch reads WSACYWKDLLR. A helical transmembrane segment spans residues 242–262; that stretch reads IQFWIAAVIFLGMLEKAVYYA. The Lumenal portion of the chain corresponds to 263 to 293; it reads EYQNTDNTGVSSHGLLIFAELISSIKRTLAR. Residues 294–314 form a helical membrane-spanning segment; that stretch reads LLVTIVSLGYGIIKPRLGAVM. Topologically, residues 315–316 are cytoplasmic; sequence HR. Residues 317-337 traverse the membrane as a helical segment; the sequence is VVGMGVLYFVFAAVEGVMRII. Over 338 to 344 the chain is Lumenal; it reads GAKEYDL. A helical transmembrane segment spans residues 345 to 365; sequence VLLAGIPLALLDSGLCWWIFV. Topologically, residues 366 to 384 are cytoplasmic; the sequence is SLAQTMKTLKLRKNTVKYS. Residues 385-405 form a helical membrane-spanning segment; sequence LYRHFTNTLIFAILASIIFMI. Residues 406 to 422 lie on the Lumenal side of the membrane; that stretch reads WRTKKFQLVDCQADWME. The helical transmembrane segment at 423 to 443 threads the bilayer; the sequence is LWVDDAYWRFLFFIILLVIMF. Residues 444 to 541 are Cytoplasmic-facing; it reads LWRPSANNQR…MTKYEMSKIE (98 aa).

This sequence belongs to the LU7TM family. TMEM87 subfamily.

The protein localises to the cell membrane. The protein resides in the golgi apparatus membrane. Its function is as follows. Potential monoatomic ion channel gated by mechanical force, implicated in normal touch sensitivity through the generation of mechanically activated currents. However, a direct channel activity is debated and an alternative could be that it functions as a chaperone for an unidentified mechanosensitive ion channel. Could also be involved in cell mechanosensitivity regulating cell adhesion and migration. May also be involved in retrograde transport from endosomes to the trans-Golgi network (TGN). The polypeptide is Transmembrane protein 87A (Xenopus tropicalis (Western clawed frog)).